The primary structure comprises 344 residues: Bifunctional trans-3-hydroxy-L-proline dehydratase/2-epimerase (344 aa).

Catalysis depends on S90, which acts as the Proton acceptor. Substrate is bound by residues 91-92, D252, and 257-258; these read GS and GT.

This sequence belongs to the proline racemase family.

It carries out the reaction trans-3-hydroxy-L-proline = 1-pyrroline-2-carboxylate + H2O. It catalyses the reaction trans-3-hydroxy-L-proline = cis-3-hydroxy-D-proline. Functionally, bifunctional enzyme catalyzing both the dehydration of trans-3-hydroxy-L-proline (t3LHyp) to Delta(1)-pyrroline-2-carboxylate (Pyr2C) and 2-epimerization of t3LHyp to cis-3-hydroxy-D-proline (c3DHyp). No dehydratase activity with L-proline, trans-4-hydroxy-L-proline (t4LHyp), cis-4-hydroxy-L-proline (c4LHyp), D-proline, cis-4-hydroxy-D-proline (c4DHyp), trans-4-hydroxy-D-proline (t4DHyp) or L-serine as substrates. Displays neither t4LHyp epimerase nor proline racemase activity. Is likely involved in a degradation pathway that converts t3LHyp to L-proline, which would allow P.aeruginosa to grow on t3LHyp as a sole carbon source. The sequence is that of Bifunctional trans-3-hydroxy-L-proline dehydratase/2-epimerase from Pseudomonas aeruginosa (strain ATCC 15692 / DSM 22644 / CIP 104116 / JCM 14847 / LMG 12228 / 1C / PRS 101 / PAO1).